The sequence spans 222 residues: Thiopurine S-methyltransferase (222 aa).

The S-adenosyl-L-methionine site is built by W10, L45, E66, and R124.

It belongs to the class I-like SAM-binding methyltransferase superfamily. TPMT family.

It localises to the cytoplasm. It catalyses the reaction S-adenosyl-L-methionine + a thiopurine = S-adenosyl-L-homocysteine + a thiopurine S-methylether.. This chain is Thiopurine S-methyltransferase, found in Methylococcus capsulatus (strain ATCC 33009 / NCIMB 11132 / Bath).